Here is a 287-residue protein sequence, read N- to C-terminus: Phospholipid phosphatase 2 (287 aa).

The Cytoplasmic segment spans residues 1 to 4 (MERR). Residues 5-25 (WVFVLLDVLCVLVAALPCAIL) form a helical membrane-spanning segment. The Lumenal segment spans residues 26-51 (TFVNTPYKRGFYCGDDSIRYPYRPDT). A helical membrane pass occupies residues 52-72 (ITHGLMAGVIITATVILVSAG). The Cytoplasmic segment spans residues 73–87 (EAYLVYTDRLYSRSD). Residues 88–108 (FNNYLAALYKVVGTFLFGAAV) traverse the membrane as a helical segment. Over 109–161 (SQSLTDLAKYMTGRLRPNFLAVCDPDWSRVNCSAYVQVEVCRGSSANVTESRL) the chain is Lumenal. The tract at residues 117–125 (KYMTGRLRP) is phosphatase sequence motif I. N139 and N155 each carry an N-linked (GlcNAc...) asparagine glycan. A helical transmembrane segment spans residues 162–182 (SFYSGHSSFGMYCMVFLALYV). A phosphatase sequence motif II region spans residues 164–167 (YSGH). The active-site Proton donors is H167. The Cytoplasmic segment spans residues 183–193 (QARLCWKWARL). A helical transmembrane segment spans residues 194-211 (LRPTVQFFLVAFALYVGY). The Lumenal portion of the chain corresponds to 212–218 (TRVSDHK). Positions 212 to 223 (TRVSDHKHHWSD) are phosphatase sequence motif III. Catalysis depends on H219, which acts as the Nucleophile. A helical transmembrane segment spans residues 219-239 (HHWSDVLVGLLQGALVASLTV). Residues 240–287 (RYISDFFKARPPQHCPEEEDLERKPSLSLTLALGETDCNHYGYPVSSS) lie on the Cytoplasmic side of the membrane.

This sequence belongs to the PA-phosphatase related phosphoesterase family. Forms functional homodimers and homooligomers. Can also form heterooligomers with PLPP1 and PLPP3. In terms of processing, N-glycosylated.

It localises to the membrane. The protein localises to the cell membrane. It is found in the early endosome membrane. Its subcellular location is the endoplasmic reticulum membrane. It carries out the reaction a 1,2-diacyl-sn-glycero-3-phosphate + H2O = a 1,2-diacyl-sn-glycerol + phosphate. It catalyses the reaction 1,2-dihexadecanoyl-sn-glycero-3-phosphate + H2O = 1,2-dihexadecanoyl-sn-glycerol + phosphate. The catalysed reaction is 1,2-di-(9Z-octadecenoyl)-sn-glycero-3-phosphate + H2O = 1,2-di-(9Z-octadecenoyl)-sn-glycerol + phosphate. The enzyme catalyses a monoacyl-sn-glycero-3-phosphate + H2O = a monoacylglycerol + phosphate. It carries out the reaction (9Z)-octadecenoyl-sn-glycero-3-phosphate + H2O = (9Z-octadecenoyl)-glycerol + phosphate. It catalyses the reaction sphing-4-enine 1-phosphate + H2O = sphing-4-enine + phosphate. The catalysed reaction is an N-acylsphing-4-enine 1-phosphate + H2O = an N-acylsphing-4-enine + phosphate. The enzyme catalyses N-(octanoyl)-sphing-4-enine-1-phosphate + H2O = N-octanoylsphing-4-enine + phosphate. It carries out the reaction N-(9Z-octadecenoyl)-ethanolamine phosphate + H2O = N-(9Z-octadecenoyl) ethanolamine + phosphate. It functions in the pathway lipid metabolism; phospholipid metabolism. With respect to regulation, magnesium-independent phospholipid phosphatase. Insensitive to N-ethylmaleimide. Magnesium-independent phospholipid phosphatase that catalyzes the dephosphorylation of a variety of glycerolipid and sphingolipid phosphate esters including phosphatidate/PA, lysophosphatidate/LPA, sphingosine 1-phosphate/S1P and ceramide 1-phosphate/C1P. Has no apparent extracellular phosphatase activity and therefore most probably acts intracellularly. Also acts on N-oleoyl ethanolamine phosphate/N-(9Z-octadecenoyl)-ethanolamine phosphate, a potential physiological compound. Through dephosphorylation of these bioactive lipid mediators produces new bioactive compounds and may regulate signal transduction in different cellular processes. Indirectly regulates, for instance, cell cycle G1/S phase transition through its phospholipid phosphatase activity. This is Phospholipid phosphatase 2 from Bos taurus (Bovine).